Here is a 79-residue protein sequence, read N- to C-terminus: U-myrmeciitoxin(01)-Mg9a (79 aa).

The signal sequence occupies residues 1–21 (MKLSCLLLTLAIIFVLTIVHA). The propeptide occupies 22–48 (PNVEAKALANPESDAIGFADAVGEADP). Q78 is subject to Glutamine amide.

In terms of tissue distribution, expressed by the venom gland.

The protein localises to the secreted. Its function is as follows. May have antimicrobial properties, like most ant linear peptides. The protein is U-myrmeciitoxin(01)-Mg9a of Myrmecia gulosa (Red bulldog ant).